Here is a 181-residue protein sequence, read N- to C-terminus: MEPEIKIVNVVVSTQIGTDIDLEYAADILDNAEYEPEQFPGLVCRLSDPKVALLIFRSGKLNCTGAKSKEDAEIAIKKIIKELKDAGMDIIDNPEVNVQNMVATADLGIEPNLDDISTLEGTEYEPEQFPGLVYRLSDPKVVVLIFGSGKVVITGLKKKDDAYLALDKILSTLKELEEEYY.

Tandem repeats lie at residues 7–83 and 98–173.

Belongs to the TBP family.

Functionally, general factor that plays a role in the activation of archaeal genes transcribed by RNA polymerase. Binds specifically to the TATA box promoter element which lies close to the position of transcription initiation. This chain is TATA-box-binding protein (tbp), found in Methanothermococcus thermolithotrophicus (Methanococcus thermolithotrophicus).